A 278-amino-acid polypeptide reads, in one-letter code: MDEQQWTGQLDLTVFFDGNRSVSRDIFFEKALKVIRPVYLNQSTIPTFYIVNVGGGYLDGDRYRMNVNVEDNAKVTLTSQGATKIYKTPSNHVEQYQTFNLKDNAYLEYVADPIIAYENAKFYQHNTFNLNNSSSLFYTDILTPGYSKTGEAFKYQYMHLINEIYIEDELVTYDNLLLNPNKQSINEIGYMEHYSHYGSAYFIHEDVNQKLIDSVYETISSYSNTFDCRVAISQLPTHGFAVRIFAYRTQIIEKILGTIQSYIAENIYDRKLDFLRKY.

Belongs to the UreD family. UreD, UreF and UreG form a complex that acts as a GTP-hydrolysis-dependent molecular chaperone, activating the urease apoprotein by helping to assemble the nickel containing metallocenter of UreC. The UreE protein probably delivers the nickel.

The protein localises to the cytoplasm. In terms of biological role, required for maturation of urease via the functional incorporation of the urease nickel metallocenter. In Staphylococcus aureus (strain JH1), this protein is Urease accessory protein UreD.